Reading from the N-terminus, the 432-residue chain is MRVVILGSGVVGVASAWYLNQAGHEVTVIDREPGAALETSAANAGQISPGYAAPWAAPGVPLKAIKWMFQRHAPLAVRLDGTQFQLKWMWQMLRNCDTSHYMENKGRMVRLAEYSRDCLKALRAETNIQYEGRQGGTLQLFRTEQQYENATRDIAVLEDAGVPYQLLESSRLAEVEPALAEVAHKLTGGLQLPNDETGDCQLFTQNLARMAEQAGVKFRFNTPVDQLLCDGEQIYGVKCGDEVIKADAYVMAFGSYSTAMLKGIVDIPVYPLKGYSLTIPIAQEDGAPVSTILDETYKIAITRFDNRIRVGGMAEIVGFNTELLQPRRETLEMVVRDLYPRGGHVEQATFWTGLRPMTPDGTPVVGRTRFKNLWLNTGHGTLGWTMACGSGQLLSDLLSGRTPAIPYEDLSVARYSRGFTPSRPGHLHGAHS.

3 to 17 is an FAD binding site; sequence VVILGSGVVGVASAW.

Belongs to the DadA oxidoreductase family. The cofactor is FAD.

The catalysed reaction is a D-alpha-amino acid + A + H2O = a 2-oxocarboxylate + AH2 + NH4(+). The protein operates within amino-acid degradation; D-alanine degradation; NH(3) and pyruvate from D-alanine: step 1/1. Oxidative deamination of D-amino acids. The sequence is that of D-amino acid dehydrogenase from Shigella sonnei (strain Ss046).